The chain runs to 97 residues: DNA-binding protein HU (97 aa).

Belongs to the bacterial histone-like protein family. As to quaternary structure, has been isolated in complexes with 5S rRNA and bL25, and with 5S rRNA, bL25 and uL5. Homodimer.

In terms of biological role, histone-like DNA-binding protein which is capable of wrapping DNA to stabilize it, and thus to prevent its denaturation under extreme environmental conditions. The protein is DNA-binding protein HU of Thermus thermophilus (strain ATCC 27634 / DSM 579 / HB8).